A 209-amino-acid chain; its full sequence is Redox-sensing transcriptional repressor Rex (209 aa).

Residues 16–55 constitute a DNA-binding region (H-T-H motif); it reads LYYRFIQNLSLSGKQRVSSAELSEAVKVDSATIRRDFSYF. 90 to 95 lines the NAD(+) pocket; that stretch reads GVGNLG.

Belongs to the transcriptional regulatory Rex family. As to quaternary structure, homodimer.

It is found in the cytoplasm. Its function is as follows. Modulates transcription in response to changes in cellular NADH/NAD(+) redox state. This Bacillus mycoides (strain KBAB4) (Bacillus weihenstephanensis) protein is Redox-sensing transcriptional repressor Rex.